An 85-amino-acid chain; its full sequence is Large ribosomal subunit protein bL31B (85 aa).

The protein belongs to the bacterial ribosomal protein bL31 family. Type B subfamily. In terms of assembly, part of the 50S ribosomal subunit.

This is Large ribosomal subunit protein bL31B from Pseudarthrobacter chlorophenolicus (strain ATCC 700700 / DSM 12829 / CIP 107037 / JCM 12360 / KCTC 9906 / NCIMB 13794 / A6) (Arthrobacter chlorophenolicus).